The primary structure comprises 219 residues: Putative mediator of RNA polymerase II transcription subunit 10 (219 aa).

Over residues 1–39 (MEQQQPQQQNDGQQQQQQQQQHQQQQQQQQQQQQQQQQS) the composition is skewed to low complexity. 2 disordered regions span residues 1–42 (MEQQ…SEQE) and 177–219 (KETQ…INNN). 2 coiled-coil regions span residues 13–74 (QQQQ…VVEE) and 166–219 (EYAE…INNN). The segment covering 177–192 (KETQEQQNDDQIKVDD) has biased composition (basic and acidic residues). The segment covering 194-219 (NNNNNNNNNNNYNNNNNNNNNNINNN) has biased composition (low complexity).

It belongs to the Mediator complex subunit 10 family. In terms of assembly, component of the Mediator complex.

It is found in the nucleus. Its function is as follows. Component of the Mediator complex, a coactivator involved in the regulated transcription of nearly all RNA polymerase II-dependent genes. Mediator functions as a bridge to convey information from gene-specific regulatory proteins to the basal RNA polymerase II transcription machinery. Mediator is recruited to promoters by direct interactions with regulatory proteins and serves as a scaffold for the assembly of a functional preinitiation complex with RNA polymerase II and the general transcription factors. This chain is Putative mediator of RNA polymerase II transcription subunit 10 (med10), found in Dictyostelium discoideum (Social amoeba).